The sequence spans 756 residues: Lysyl oxidase homolog 4 (756 aa).

Positions 1 to 24 (MAWSPPATLFLFLLLLGQPPPSRP) are cleaved as a signal peptide. SRCR domains are found at residues 32-133 (LRLV…VICH), 159-287 (VRLK…VSCV), 311-411 (VRLR…VRCN), and 421-529 (VRLA…VSCM). Disulfide bonds link Cys-58-Cys-122, Cys-71-Cys-132, Cys-102-Cys-112, Cys-191-Cys-276, Cys-204-Cys-286, Cys-251-Cys-261, Cys-336-Cys-400, Cys-349-Cys-410, Cys-380-Cys-390, Cys-450-Cys-515, Cys-463-Cys-528, Cys-497-Cys-507, Cys-558-Cys-564, Cys-610-Cys-658, Cys-642-Cys-648, Cys-670-Cys-680, and Cys-717-Cys-731. Asn-198 carries N-linked (GlcNAc...) asparagine glycosylation. The tract at residues 533–736 (PDLVMNAQLV…WLHNCHTGNS (204 aa)) is lysyl-oxidase like. Positions 611, 613, and 615 each coordinate Cu cation. Asn-629 is a glycosylation site (N-linked (GlcNAc...) asparagine). Residues 638–674 (KASFCLEDTNCPTGLQRRYACANFGEQGVTVGCWDTY) constitute a cross-link (lysine tyrosylquinone (Lys-Tyr)). Tyr-674 is modified (2',4',5'-topaquinone).

It belongs to the lysyl oxidase family. It depends on Cu cation as a cofactor. Requires lysine tyrosylquinone residue as cofactor. In terms of processing, the lysine tyrosylquinone cross-link (LTQ) is generated by condensation of the epsilon-amino group of a lysine with a topaquinone produced by oxidation of tyrosine. May be proteolytically cleaved by BMP1. In terms of tissue distribution, expressed in many tissues, the highest levels among the tissues studied being in the skeletal muscle, testis and pancreas. Expressed in cartilage.

It is found in the secreted. Its subcellular location is the extracellular space. It catalyses the reaction L-lysyl-[protein] + O2 + H2O = (S)-2-amino-6-oxohexanoyl-[protein] + H2O2 + NH4(+). Inhibited by beta-aminopropionitrile (BAPN). Functionally, catalyzes the oxidative deamination of lysine and hydroxylysine residues in collagen and elastin, resulting in the formation of covalent cross-linkages, and the stabilization of collagen and elastin fibers. The chain is Lysyl oxidase homolog 4 (LOXL4) from Homo sapiens (Human).